A 331-amino-acid chain; its full sequence is Aromatic 2-oxoacid reductase (331 aa).

NAD(+)-binding positions include 154-155 (RI), D175, 205-206 (AP), N211, 232-234 (AAR), and D258. R234 is a catalytic residue. The active site involves E263. The Proton donor role is filled by H295.

The protein belongs to the D-isomer specific 2-hydroxyacid dehydrogenase family.

The catalysed reaction is (R)-3-phenyllactate + NAD(+) = 3-phenylpyruvate + NADH + H(+). It catalyses the reaction (2R)-2-hydroxy-3-(4-hydroxyphenyl)propanoate + NAD(+) = 3-(4-hydroxyphenyl)pyruvate + NADH + H(+). It carries out the reaction 3-(indol-3-yl)lactate + NAD(+) = indole-3-pyruvate + NADH + H(+). It participates in amino-acid degradation. Essential for the reductive metabolism of L-phenylalanine, L-tyrosine and L-tryptophan. Catalyzes the conversion of phenylpyruvic acid to phenyllactic acid, 4-hydroxy-phenylpyruvic acid to 4-hydroxy-phenyllactic acid, and indolepyruvic acid to indolelactic acid. In Clostridium sporogenes (strain ATCC 7955 / DSM 767 / NBRC 16411 / NCIMB 8053 / NCTC 8594 / PA 3679), this protein is Aromatic 2-oxoacid reductase.